A 90-amino-acid polypeptide reads, in one-letter code: Putative defensin-like protein 64 (90 aa).

The signal sequence occupies residues 1–23 (MWGRQIVLKIFFLVLSCVIVIET). 2 cysteine pairs are disulfide-bonded: C33–C56 and C42–C77.

Belongs to the DEFL family.

Its subcellular location is the secreted. The protein is Putative defensin-like protein 64 of Arabidopsis thaliana (Mouse-ear cress).